The sequence spans 80 residues: Large ribosomal subunit protein bL31B (80 aa).

This sequence belongs to the bacterial ribosomal protein bL31 family. Type B subfamily. As to quaternary structure, part of the 50S ribosomal subunit.

The polypeptide is Large ribosomal subunit protein bL31B (Shouchella clausii (strain KSM-K16) (Alkalihalobacillus clausii)).